Here is a 213-residue protein sequence, read N- to C-terminus: Orotate phosphoribosyltransferase (213 aa).

Lys-26 lines the 5-phospho-alpha-D-ribose 1-diphosphate pocket. An orotate-binding site is contributed by 34-35 (FF). 5-phospho-alpha-D-ribose 1-diphosphate is bound by residues 72–73 (YK), Arg-99, Lys-100, Lys-103, His-105, and 124–132 (DDVITAGTA). Residues Thr-128 and Arg-156 each contribute to the orotate site.

Belongs to the purine/pyrimidine phosphoribosyltransferase family. PyrE subfamily. As to quaternary structure, homodimer. Mg(2+) is required as a cofactor.

The catalysed reaction is orotidine 5'-phosphate + diphosphate = orotate + 5-phospho-alpha-D-ribose 1-diphosphate. The protein operates within pyrimidine metabolism; UMP biosynthesis via de novo pathway; UMP from orotate: step 1/2. Its function is as follows. Catalyzes the transfer of a ribosyl phosphate group from 5-phosphoribose 1-diphosphate to orotate, leading to the formation of orotidine monophosphate (OMP). The protein is Orotate phosphoribosyltransferase of Pseudomonas putida (strain GB-1).